The chain runs to 258 residues: Synapse differentiation-inducing gene protein 1 (258 aa).

The Cytoplasmic segment spans residues 1 to 181 (MDGIVEQKSV…NFLMMPPRDH (181 aa)). S137 bears the Phosphoserine mark. The helical transmembrane segment at 182 to 202 (LGLSVFSMLCCFWPLGIAAFY) threads the bilayer. The Extracellular segment spans residues 203-228 (LSHETNKAVAKGDFHQASTSSRRALF). Residues 229–249 (LAVLSITIGTGIYVGVAVALI) constitute an intramembrane region (helical). Residues 250 to 258 (AYLSKNNHL) are Extracellular-facing.

It belongs to the CD225/Dispanin family. In terms of assembly, homodimer. Interacts with GRIA1 and GRIA2. In terms of tissue distribution, enriched in the cerebellum and also expressed in the neocortex and modestly in the hippocampus (at protein level). Expressed in hippocampal neurons, both in cell body and neurites, however its presence is enriched at excitatory synapses and also found in postsynaptic cells.

Its subcellular location is the cell membrane. It localises to the early endosome membrane. It is found in the postsynaptic density membrane. The protein localises to the synapse. The protein resides in the cell projection. Its subcellular location is the dendrite. It localises to the dendritic spine. Functionally, may regulate AMPA receptor content at nascent synapses, and have a role in postsynaptic development and maturation. The polypeptide is Synapse differentiation-inducing gene protein 1 (Syndig1) (Rattus norvegicus (Rat)).